A 603-amino-acid chain; its full sequence is Methionine--tRNA ligase (603 aa).

Residues 14-24 carry the 'HIGH' region motif; sequence PYANGPRHIGH. Zn(2+) is bound by residues Cys-146, Cys-149, Cys-159, and Cys-162. The 'KMSKS' region motif lies at 354-358; the sequence is KFSSS. An ATP-binding site is contributed by Ser-357.

The protein belongs to the class-I aminoacyl-tRNA synthetase family. MetG type 1 subfamily. As to quaternary structure, monomer. It depends on Zn(2+) as a cofactor.

It is found in the cytoplasm. The enzyme catalyses tRNA(Met) + L-methionine + ATP = L-methionyl-tRNA(Met) + AMP + diphosphate. Is required not only for elongation of protein synthesis but also for the initiation of all mRNA translation through initiator tRNA(fMet) aminoacylation. The sequence is that of Methionine--tRNA ligase from Salinispora tropica (strain ATCC BAA-916 / DSM 44818 / JCM 13857 / NBRC 105044 / CNB-440).